The following is a 78-amino-acid chain: RNA-binding protein Hfq (78 aa).

The region spanning 10–69 is the Sm domain; that stretch reads DPFLNTLRKEHVPVSIYLVNGIKLQGQIESFDQYVVLLRNTVTQMVYKHAISTVVPARAV.

The protein belongs to the Hfq family. In terms of assembly, homohexamer.

RNA chaperone that binds small regulatory RNA (sRNAs) and mRNAs to facilitate mRNA translational regulation in response to envelope stress, environmental stress and changes in metabolite concentrations. Also binds with high specificity to tRNAs. This is RNA-binding protein Hfq from Bordetella petrii (strain ATCC BAA-461 / DSM 12804 / CCUG 43448).